The following is a 136-amino-acid chain: C-type natriuretic peptide prohormone (136 aa).

A signal peptide spans 1-21; it reads MSGQTSFYCGLLLVLLIQAQA. The cysteines at positions 120 and 136 are disulfide-linked.

This sequence belongs to the natriuretic peptide family. As to expression, CNP-115 is differentially processed to produce CNP-38 and CNP-39 in the heart and CNP-22 in the brain.

It is found in the secreted. Hormone which may be vasoactive and natriuretic. Has a cGMP-stimulating activity. The chain is C-type natriuretic peptide prohormone from Triakis scyllium (Banded houndshark).